The following is a 146-amino-acid chain: Probable actin-related protein 2/3 complex subunit 5 (146 aa).

This sequence belongs to the ARPC5 family. Component of the Arp2/3 complex composed of ARP2, ARP3, ARPC1B/p41-ARC, ARPC2/p34-ARC, ARPC3/p21-ARC, ARPC4/p20-ARC and ARPC5/p16-ARC.

The protein localises to the cytoplasm. The protein resides in the cytoskeleton. Functionally, functions as a component of the Arp2/3 complex which is involved in regulation of actin polymerization and together with an activating nucleation-promoting factor (NPF) mediates the formation of branched actin networks. This chain is Probable actin-related protein 2/3 complex subunit 5, found in Caenorhabditis elegans.